Reading from the N-terminus, the 389-residue chain is MDFNLSKELQMLQKEVRNFVNKKIVPFADQWDNENHFPYEEAVRPMGELGFFGTVIPEEYGGEGMDQGWLAAMIVTEEIARGSSALRVQLNMEVLGCAYTILTYGSEALKKKYVPKLSSAEFLGGFGITEPDAGSDVMAMSSTAEDKGDHWLLNGSKTWISNAAQADVLIYYAYTDKAAGSRGLSAFVIEPRNFPGIKTSNLEKLGSHASPTGELFLDNVKVPKENILGKPGDGARIVFGSLNHTRLSAAAGGVGLAQACLDAAIKYCNERRQFGKPIGDFQMNQDMIAQMAVEVEAARLLAYKAAAAKDEGRLNNGLDVAMAKYAAGEAVSKCANYAMRILGAYGYSTEYPVARFYRDAPTYYMVEGSANICKMIIALDQLGVRKANR.

The substrate site is built by Arg-87 and Asn-91. FAD contacts are provided by residues 126 to 129 (FGIT), Ser-135, and 159 to 161 (WIS). Ser-135 provides a ligand contact to substrate. Ser-181 contributes to the substrate binding site. Residues Arg-271, 281 to 284 (FQMN), Arg-340, Ala-344, and 367 to 371 (EGSAN) contribute to the FAD site. Glu-367 acts as the Proton acceptor in catalysis. Arg-385 provides a ligand contact to substrate.

This sequence belongs to the acyl-CoA dehydrogenase family. Homotetramer. The cofactor is FAD.

It carries out the reaction glutaryl-CoA + A = (2E)-glutaconyl-CoA + AH2. It participates in aromatic compound metabolism; benzoyl-CoA degradation. With respect to regulation, inhibited by glutaconyl-CoA. Functionally, catalyzes the dehydrogenation of Glutaryl-CoA to glutaconyl-CoA. This chain is Glutaryl-CoA dehydrogenase (Acd), found in Desulfococcus multivorans.